Reading from the N-terminus, the 819-residue chain is Zinc finger protein with KRAB and SCAN domains 5 (819 aa).

The SCAN box domain maps to 51 to 132 (QRFKHFQYHE…AVIESIQREL (82 aa)). Glycyl lysine isopeptide (Lys-Gly) (interchain with G-Cter in SUMO2) cross-links involve residues lysine 214, lysine 246, and lysine 302. The 72-residue stretch at 216–287 (EDVADVAVSF…HWVAAERTEK (72 aa)) folds into the KRAB domain. Disordered stretches follow at residues 236–263 (SQKSLGRDSRKEDCESTTPVDYEPKEGN) and 283–340 (ERTE…GERG). A compositionally biased stretch (basic and acidic residues) spans 240-249 (LGRDSRKEDC). Residues 329–340 (VNRKQKSNGERG) show a composition bias toward basic and acidic residues. 9 C2H2-type zinc fingers span residues 341-363 (HRCGDCGKFFLQASNFIQHRRIH), 369-391 (FKCGECGKSYNQRVHLTQHQRVH), 397-419 (YKCQVCGKAFRVSSHLVQHHSVH), 425-447 (YGCNECGKSFGRHSHLIEHLKRH), 540-562 (HQCNECGKSFIQSAHLIQHRRIH), 568-590 (FRCEECGKSYNQRVHLTQHHRVH), 596-618 (YACHLCGKAFRVRSHLVQHQSVH), 624-646 (FKCNECGKGFGRRSHLAGHLRLH), and 652-674 (HQCHECGEIFFQYVSLLEHQVLH). A Glycyl lysine isopeptide (Lys-Gly) (interchain with G-Cter in SUMO2) cross-link involves residue lysine 700. 3 consecutive C2H2-type zinc fingers follow at residues 708-730 (YQCDSCGKAFSYSSDLIQHYRTH), 764-786 (HQCNECGRGFSLKSHLSQHQRIH), and 792-814 (LQCKECGMSFSWSCSLFKHLRSH). Residue lysine 776 forms a Glycyl lysine isopeptide (Lys-Gly) (interchain with G-Cter in SUMO2) linkage.

It belongs to the krueppel C2H2-type zinc-finger protein family. Testis specific.

It localises to the nucleus. Its function is as follows. May be involved in transcriptional regulation. The protein is Zinc finger protein with KRAB and SCAN domains 5 (Zkscan5) of Mus musculus (Mouse).